Consider the following 254-residue polypeptide: Triosephosphate isomerase (254 aa).

12–14 serves as a coordination point for substrate; the sequence is NWK. His-99 acts as the Electrophile in catalysis. Glu-169 (proton acceptor) is an active-site residue. Substrate-binding positions include Gly-175, Ser-214, and 235–236; that span reads GG.

This sequence belongs to the triosephosphate isomerase family. In terms of assembly, homodimer.

The protein resides in the cytoplasm. It catalyses the reaction D-glyceraldehyde 3-phosphate = dihydroxyacetone phosphate. The protein operates within carbohydrate biosynthesis; gluconeogenesis. It participates in carbohydrate degradation; glycolysis; D-glyceraldehyde 3-phosphate from glycerone phosphate: step 1/1. In terms of biological role, involved in the gluconeogenesis. Catalyzes stereospecifically the conversion of dihydroxyacetone phosphate (DHAP) to D-glyceraldehyde-3-phosphate (G3P). The sequence is that of Triosephosphate isomerase from Brucella abortus biovar 1 (strain 9-941).